The chain runs to 560 residues: DNA ligase B (560 aa).

Catalysis depends on Lys-124, which acts as the N6-AMP-lysine intermediate.

The protein belongs to the NAD-dependent DNA ligase family. LigB subfamily.

It catalyses the reaction NAD(+) + (deoxyribonucleotide)n-3'-hydroxyl + 5'-phospho-(deoxyribonucleotide)m = (deoxyribonucleotide)n+m + AMP + beta-nicotinamide D-nucleotide.. In terms of biological role, catalyzes the formation of phosphodiester linkages between 5'-phosphoryl and 3'-hydroxyl groups in double-stranded DNA using NAD as a coenzyme and as the energy source for the reaction. The protein is DNA ligase B of Escherichia coli O6:H1 (strain CFT073 / ATCC 700928 / UPEC).